The sequence spans 727 residues: Centrosomal protein kizuna (727 aa).

Residues 1–20 are disordered; sequence MTERSGRGGGTRGASALPSP. The stretch at 77–124 forms a coiled coil; that stretch reads KNARIRNQEYLKQFERIQANITASLEKLQELKIEFETQIKKMQLLSKD. 3 disordered regions span residues 176–226, 271–456, and 564–727; these read DFTT…NKSD, EGKK…FTNL, and RLAV…PRTP. A compositionally biased stretch (polar residues) spans 198-223; the sequence is HQQTAQSSDVTGSRVVQTPGDTQCLN. Positions 286-324 are enriched in basic and acidic residues; it reads LSPENRTTDLKCDSSRRSEGSEGEILTREHIEVEEERAR. Residue serine 328 is modified to Phosphoserine. The segment covering 343–359 has biased composition (basic and acidic residues); the sequence is PQEKPPARKASSDHLPC. Low complexity predominate over residues 380 to 390; the sequence is LSSSSDLTVSV. Threonine 387 is modified (phosphothreonine; by PLK1). Residues 442-455 are compositionally biased toward polar residues; that stretch reads APSTPDSPNESFTN. Over residues 569 to 583 the composition is skewed to low complexity; it reads SSKSSCSLPSTPSDE. Over residues 603-613 the composition is skewed to acidic residues; that stretch reads QEDESREESTE. The segment covering 631–642 has biased composition (polar residues); that stretch reads LKQSALQGSTHQ. 2 stretches are compositionally biased toward low complexity: residues 659 to 669 and 677 to 689; these read GLKTGSGTFKT and SEAS…GSPL. Phosphoserine occurs at positions 711, 714, and 716.

The protein belongs to the kizuna family. As to quaternary structure, interacts with AKAP9, CEP72, ODF2, PCNT and TUBGCP2. In terms of processing, phosphorylation at Thr-387 by PLK1 is not needed for centrosomal localization or pericentriolar material expansion but is indispensable for spindle-pole stabilization.

The protein localises to the cytoplasm. Its subcellular location is the cytoskeleton. The protein resides in the microtubule organizing center. It localises to the centrosome. It is found in the cilium basal body. Centrosomal protein required for establishing a robust mitotic centrosome architecture that can endure the forces that converge on the centrosomes during spindle formation. Required for stabilizing the expanded pericentriolar material around the centriole. The polypeptide is Centrosomal protein kizuna (KIZ) (Bos taurus (Bovine)).